Consider the following 2531-residue polypeptide: Putative neurobeachin homolog (2531 aa).

3 stretches are compositionally biased toward acidic residues: residues 1–10 (MDISETEYND), 26–35 (EDEVNDEESN), and 62–74 (EPSDDQQNVEESE). 4 disordered regions span residues 1–101 (MDIS…SPPP), 1363–1398 (NDGDHASIKNGSDHSENGADEETEEKGEQGQGDNGG), 1420–1440 (EELKKMHQSNGRRPSTLMPPQ), and 1642–1670 (RFVPNPYGSRHEEANLPEGEKNEEPEISE). Basic and acidic residues predominate over residues 1363 to 1379 (NDGDHASIKNGSDHSEN). Over residues 1427–1440 (QSNGRRPSTLMPPQ) the composition is skewed to polar residues. Over residues 1650–1670 (SRHEEANLPEGEKNEEPEISE) the composition is skewed to basic and acidic residues. One can recognise a BEACH-type PH domain in the interval 1714 to 1822 (PSSQSACFST…TVRKVVYQLP (109 aa)). Positions 1841 to 2130 (MTPRQLFKHS…QLLAEAHPPR (290 aa)) constitute a BEACH domain. 4 WD repeats span residues 2289-2332 (GHGD…GFIA), 2350-2389 (GHEASISALCVSAEHGLVVSGCEDGVILIHTTASDLLRRI), 2429-2468 (LSEEKIECVTVTRDGEFAVTGAVNGRITIWRMFPLNKLYT), and 2471-2510 (PLNSAVRSVAVVASHRFILGGLDSGAIVVFNADFNRWHYE).

This sequence belongs to the WD repeat neurobeachin family. As to quaternary structure, interacts with RII subunit of PKA.

Its subcellular location is the cytoplasm. It localises to the membrane. The protein resides in the nucleus. Binds to type II regulatory subunits of protein kinase A and anchors/targets them to the membrane. May anchor the kinase to cytoskeletal and/or organelle-associated proteins. Regulates endosomal traffic in polarized epithelial cells such as the vulval precursor cells and intestinal cells. Thought to act as a negative regulator of lin-12 activity in vulval precursor cells. May have a role in the internalization process from basolateral surface of polarized epithelial cells. The protein is Putative neurobeachin homolog of Caenorhabditis briggsae.